The sequence spans 401 residues: O-methyltransferase SAT18 (401 aa).

Residue Asp-249 coordinates S-adenosyl-L-methionine. His-300 serves as the catalytic Proton acceptor.

This sequence belongs to the class I-like SAM-binding methyltransferase superfamily. Cation-independent O-methyltransferase family.

The protein operates within mycotoxin biosynthesis. In terms of biological role, O-methyltransferase; part of the satratoxin SC3 cluster involved in the biosynthesis of satratoxins, trichothecene mycotoxins that are associated with human food poisonings. Satratoxins are suggested to be made by products of multiple gene clusters (SC1, SC2 and SC3) that encode 21 proteins in all, including polyketide synthases, acetyltransferases, and other enzymes expected to modify the trichothecene skeleton. SC1 encodes 10 proteins, SAT1 to SAT10. The largest are SAT8, which encodes a putative polyketide synthase (PKS) with a conventional non-reducing architecture, and SAT10, a putative protein containing four ankyrin repeats and thus may be involved in protein scaffolding. The putative short-chain reductase SAT3 may assist the PKS in some capacity. SAT6 contains a secretory lipase domain and acts probably as a trichothecene esterase. SAT5 encodes a putative acetyltransferase, and so, with SAT6, may affect endogenous protection from toxicity. The probable transcription factor SAT9 may regulate the expression of the SC1 cluster. SC2 encodes proteins SAT11 to SAT16, the largest of which encodes the putative reducing PKS SAT13. SAT11 is a cytochrome P450 monooxygenase, while SAT14 and SAT16 are probable acetyltransferases. The SC2 cluster may be regulated by the transcription factor SAT15. SC3 is a small cluster that encodes 5 proteins, SAT17 to SAT21. SAT21 is a putative MFS-type transporter which may have a role in exporting secondary metabolites. The four other proteins putatively encoded in SC3 include the taurine hydroxylase-like protein SAT17, the O-methyltransferase SAT18, the acetyltransferase SAT19, and the Cys6-type zinc finger SAT20, the latter being probably involved in regulation of SC3 expression. The protein is O-methyltransferase SAT18 of Stachybotrys chartarum (strain CBS 109288 / IBT 7711) (Toxic black mold).